We begin with the raw amino-acid sequence, 310 residues long: tRNA dimethylallyltransferase (310 aa).

Gly-5–Ser-12 serves as a coordination point for ATP. Thr-7–Ser-12 contributes to the substrate binding site. Residues Asp-30–Gln-33 form an interaction with substrate tRNA region.

It belongs to the IPP transferase family. In terms of assembly, monomer. Requires Mg(2+) as cofactor.

It catalyses the reaction adenosine(37) in tRNA + dimethylallyl diphosphate = N(6)-dimethylallyladenosine(37) in tRNA + diphosphate. In terms of biological role, catalyzes the transfer of a dimethylallyl group onto the adenine at position 37 in tRNAs that read codons beginning with uridine, leading to the formation of N6-(dimethylallyl)adenosine (i(6)A). The sequence is that of tRNA dimethylallyltransferase from Rhodopseudomonas palustris (strain HaA2).